The following is a 1393-amino-acid chain: Rab3 GTPase-activating protein non-catalytic subunit (1393 aa).

A disordered region spans residues 36–67 (RDPSKSTDWEDDGWGAWEENEPQEPEEEGNTC). At Ser-39 the chain carries Phosphoserine. The span at 44 to 64 (WEDDGWGAWEENEPQEPEEEG) shows a compositional bias: acidic residues. Phosphoserine is present on Ser-450. Phosphothreonine is present on Thr-901. Phosphoserine is present on residues Ser-916 and Ser-978.

Belongs to the Rab3-GAP regulatory subunit family. In terms of assembly, the Rab3 GTPase-activating complex is a heterodimer composed of RAB3GAP1 and RAB3GAP2. The Rab3 GTPase-activating complex interacts with DMXL2. Interacts with LMAN1. As to expression, ubiquitous.

Its subcellular location is the cytoplasm. The protein resides in the endoplasmic reticulum. Functionally, regulatory subunit of the Rab3 GTPase-activating (Rab3GAP) complex composed of RAB3GAP1 and RAB3GAP2, which has GTPase-activating protein (GAP) activity towards various Rab3 subfamily members (RAB3A, RAB3B, RAB3C and RAB3D), RAB5A and RAB43, and guanine nucleotide exchange factor (GEF) activity towards RAB18. As part of the Rab3GAP complex, acts as a GAP for Rab3 proteins by converting active RAB3-GTP to the inactive form RAB3-GDP. Rab3 proteins are involved in regulated exocytosis of neurotransmitters and hormones. The Rab3GAP complex acts as a GEF for RAB18 by promoting the conversion of inactive RAB18-GDP to the active form RAB18-GTP. Recruits and stabilizes RAB18 at the cis-Golgi membrane in human fibroblasts where RAB18 is most likely activated. Also involved in RAB18 recruitment at the endoplasmic reticulum (ER) membrane where it maintains proper ER structure. Required for normal eye and brain development. May participate in neurodevelopmental processes such as proliferation, migration and differentiation before synapse formation, and non-synaptic vesicular release of neurotransmitters. The sequence is that of Rab3 GTPase-activating protein non-catalytic subunit from Homo sapiens (Human).